Reading from the N-terminus, the 454-residue chain is Adenosylmethionine-8-amino-7-oxononanoate aminotransferase (454 aa).

Residue 119–120 coordinates pyridoxal 5'-phosphate; the sequence is GA. Substrate is bound at residue Y152. Residue D257 coordinates pyridoxal 5'-phosphate. Residues K286, G321, and R416 each contribute to the substrate site. N6-(pyridoxal phosphate)lysine is present on K286.

It belongs to the class-III pyridoxal-phosphate-dependent aminotransferase family. BioA subfamily. Homodimer. Requires pyridoxal 5'-phosphate as cofactor.

It is found in the cytoplasm. The enzyme catalyses (8S)-8-amino-7-oxononanoate + S-adenosyl-L-methionine = S-adenosyl-4-methylsulfanyl-2-oxobutanoate + (7R,8S)-7,8-diammoniononanoate. It functions in the pathway cofactor biosynthesis; biotin biosynthesis; 7,8-diaminononanoate from 8-amino-7-oxononanoate (SAM route): step 1/1. In terms of biological role, catalyzes the transfer of the alpha-amino group from S-adenosyl-L-methionine (SAM) to 7-keto-8-aminopelargonic acid (KAPA) to form 7,8-diaminopelargonic acid (DAPA). It is the only aminotransferase known to utilize SAM as an amino donor. In Anoxybacillus flavithermus (strain DSM 21510 / WK1), this protein is Adenosylmethionine-8-amino-7-oxononanoate aminotransferase.